The chain runs to 393 residues: Ceramide synthase 4 (393 aa).

The Lumenal segment spans residues 1 to 31 (MSFSLSEWLWQETYWLPPNVTWAELEDRDGL). N19 carries N-linked (GlcNAc...) asparagine glycosylation. The chain crosses the membrane as a helical span at residues 32 to 52 (VFAHPHHVLAAFPVALVLVAV). The tract at residues 67 to 128 (WMGVQDPIRR…RRRRNQDRPS (62 aa)) is homeobox-like. Residues 131–332 (KKFCEACWRF…ILRMLYSFLH (202 aa)) enclose the TLC domain. 4 consecutive transmembrane segments (helical) span residues 140-160 (FVFY…ESWL), 179-199 (LYWW…TLPF), 217-237 (VGLI…VVLL), and 265-285 (FIMF…TQVI). The Last loop motif signature appears at 291–301 (DSIKNSGPFFG). A helical transmembrane segment spans residues 304–324 (FFIVLLVMLQILHVYWFCLIL). The Cytoplasmic portion of the chain corresponds to 325 to 393 (RMLYSFLHKG…CLTNGHTRAT (69 aa)). The disordered stretch occupies residues 341–393 (RSDVEEPDSSDDEPVSEGPQLKNGMARGSRVAVTNGPRSRAAACLTNGHTRAT). Residues S342, S349, and S350 each carry the phosphoserine modification. Over residues 345-355 (EEPDSSDDEPV) the composition is skewed to acidic residues.

In terms of processing, phosphorylated at the C-terminus by CK2. In terms of tissue distribution, ubiquitously expressed, with highest levels in skin.

It localises to the endoplasmic reticulum membrane. The catalysed reaction is sphinganine + octadecanoyl-CoA = N-(octadecanoyl)-sphinganine + CoA + H(+). The enzyme catalyses eicosanoyl-CoA + sphinganine = N-eicosanoylsphinganine + CoA + H(+). It carries out the reaction docosanoyl-CoA + sphinganine = N-docosanoylsphinganine + CoA + H(+). It catalyses the reaction tetracosanoyl-CoA + sphinganine = N-tetracosanoylsphinganine + CoA + H(+). The catalysed reaction is hexacosanoyl-CoA + sphinganine = N-hexacosanoylsphinganine + CoA + H(+). The enzyme catalyses a fatty acyl-CoA + sphing-4-enine = an N-acylsphing-4-enine + CoA + H(+). It carries out the reaction sphing-4-enine + octadecanoyl-CoA = N-octadecanoylsphing-4-enine + CoA + H(+). It catalyses the reaction hexadecasphinganine + octadecanoyl-CoA = N-octadecanoylhexadecasphinganine + CoA + H(+). It participates in lipid metabolism; sphingolipid metabolism. Its function is as follows. Ceramide synthase that catalyzes formation of ceramide from sphinganine and acyl-CoA substrates, with high selectivity toward long and very-long chains (C18:0-C22:0) as acyl donor. This Mus musculus (Mouse) protein is Ceramide synthase 4.